We begin with the raw amino-acid sequence, 436 residues long: MFESKINPLWQSFILAVQEEVKPALGCTEPISLALAAAAAAAELDGTVERIDAWVSPNLMKNGMGVTVPGTGMVGLPIAAALGVLGGDAKAGLEVLKDASAKAVADAKAMLAAGHVAVMLQEPCNDILFSRAKVYSGDSWACVTIVGDHTNIVRIETDKGVVFTQADNAQEEEKTSPLGVLSHTSLEEILAFVNAVPFDAIRFILDAARLNGALSQEGLRGSWGLHIGSTLAKQCDRGLLAKDLSTAILIRTSAASDARMGGATLPAMSNSGSGNQGITATVPVMVVAEHVGADDERLARALMLSHLSAIYIHHQLPRLSALCAATTAAMGAAAGMAWLIDGRYDTIAMAISSMIGDVSGMICDGASNSCAMKVSTSASAAWKALLMALDDTAVTGNEGIVAHNVEQSIANLCSLACRSMQQTDKQIIEIMASKAH.

This sequence belongs to the UPF0597 family.

The polypeptide is UPF0597 protein YhaM (Salmonella choleraesuis (strain SC-B67)).